We begin with the raw amino-acid sequence, 314 residues long: Porphobilinogen deaminase (314 aa).

Cysteine 242 carries the post-translational modification S-(dipyrrolylmethanemethyl)cysteine.

It belongs to the HMBS family. As to quaternary structure, monomer. Dipyrromethane serves as cofactor.

It catalyses the reaction 4 porphobilinogen + H2O = hydroxymethylbilane + 4 NH4(+). It functions in the pathway porphyrin-containing compound metabolism; protoporphyrin-IX biosynthesis; coproporphyrinogen-III from 5-aminolevulinate: step 2/4. Functionally, tetrapolymerization of the monopyrrole PBG into the hydroxymethylbilane pre-uroporphyrinogen in several discrete steps. This chain is Porphobilinogen deaminase (hemC), found in Bacillus subtilis (strain 168).